A 484-amino-acid polypeptide reads, in one-letter code: Protein phosphatase 1B (484 aa).

Over residues 1–14 (MGAFLDKPKTEKHN) the composition is skewed to basic and acidic residues. The interval 1-20 (MGAFLDKPKTEKHNAHGAGN) is disordered. Residue Gly-2 is the site of N-myristoyl glycine attachment. Residue Lys-12 forms a Glycyl lysine isopeptide (Lys-Gly) (interchain with G-Cter in ISG15) linkage. One can recognise a PPM-type phosphatase domain in the interval 23–295 (RYGLSSMQGW…DNMSIVLVCF (273 aa)). Positions 60 and 61 each coordinate Mn(2+). Lys-142 is covalently cross-linked (Glycyl lysine isopeptide (Lys-Gly) (interchain with G-Cter in ISG15)). Mn(2+) contacts are provided by Asp-243 and Asp-286. Residue Ser-391 is modified to Phosphoserine. Positions 431-484 (EENPAEQAATAASSNSDAGNTVAMQESHTESKSDLAELDSCTEDAGTKMSGEKL) are disordered. Residues 440–456 (TAASSNSDAGNTVAMQE) are compositionally biased toward polar residues.

The protein belongs to the PP2C family. Monomer. Interacts with PAK6. Interacts with the phosphorylated form of IKBKB/IKKB. Mg(2+) is required as a cofactor. The cofactor is Mn(2+). Isgylation negatively regulates its activity. Post-translationally, N-myristoylation is essential for the recognition of its substrates for dephosphorylation.

It is found in the cytoplasm. Its subcellular location is the cytosol. The protein localises to the membrane. The catalysed reaction is O-phospho-L-seryl-[protein] + H2O = L-seryl-[protein] + phosphate. The enzyme catalyses O-phospho-L-threonyl-[protein] + H2O = L-threonyl-[protein] + phosphate. Functionally, enzyme with a broad specificity. Dephosphorylates PRKAA1 and PRKAA2. Inhibits TBK1-mediated antiviral signaling by dephosphorylating it at 'Ser-172'. Plays an important role in the termination of TNF-alpha-mediated NF-kappa-B activation through dephosphorylating and inactivating IKBKB/IKKB. In Bos taurus (Bovine), this protein is Protein phosphatase 1B (PPM1B).